The following is a 337-amino-acid chain: PHD finger protein 11 (337 aa).

The C2HC pre-PHD-type zinc finger occupies 42 to 78 (KRICALCPKDLECSVLYFAQSENIAAHENCLLYSSAL). The segment at 108-160 (LKCTFCGKKGATVGCDLKSCFKNYHFFCAKNDHAVLQADGRTGIYKVFCQQHA) adopts a PHD-type zinc-finger fold.

Interacts with BRCA1 and RELA.

The protein localises to the nucleus. In terms of biological role, positive regulator of Th1-type cytokine gene expression. The protein is PHD finger protein 11 (PHF11) of Bos taurus (Bovine).